The sequence spans 664 residues: UvrABC system protein B (664 aa).

Residues Asn-25–Glu-170 form the Helicase ATP-binding domain. Gly-38 to Thr-45 contributes to the ATP binding site. A Beta-hairpin motif is present at residues Tyr-91–Ile-114. Positions Gln-429 to Leu-595 constitute a Helicase C-terminal domain. In terms of domain architecture, UVR spans Lys-622 to Lys-657.

It belongs to the UvrB family. Forms a heterotetramer with UvrA during the search for lesions. Interacts with UvrC in an incision complex.

Its subcellular location is the cytoplasm. Its function is as follows. The UvrABC repair system catalyzes the recognition and processing of DNA lesions. A damage recognition complex composed of 2 UvrA and 2 UvrB subunits scans DNA for abnormalities. Upon binding of the UvrA(2)B(2) complex to a putative damaged site, the DNA wraps around one UvrB monomer. DNA wrap is dependent on ATP binding by UvrB and probably causes local melting of the DNA helix, facilitating insertion of UvrB beta-hairpin between the DNA strands. Then UvrB probes one DNA strand for the presence of a lesion. If a lesion is found the UvrA subunits dissociate and the UvrB-DNA preincision complex is formed. This complex is subsequently bound by UvrC and the second UvrB is released. If no lesion is found, the DNA wraps around the other UvrB subunit that will check the other stand for damage. The chain is UvrABC system protein B from Borreliella afzelii (strain PKo) (Borrelia afzelii).